The chain runs to 72 residues: Large ribosomal subunit protein uL29 (72 aa).

Belongs to the universal ribosomal protein uL29 family.

This is Large ribosomal subunit protein uL29 from Prochlorococcus marinus (strain AS9601).